Consider the following 173-residue polypeptide: Transcriptional repressor NrdR (173 aa).

The segment at 3–34 (CPFCQHADTRVIDSRVSEDGATIRRRRECEAC) is a zinc-finger region. The ATP-cone domain occupies 49-139 (PAIVKSDGTR…VYRSFEDVAD (91 aa)).

Belongs to the NrdR family. Zn(2+) serves as cofactor.

In terms of biological role, negatively regulates transcription of bacterial ribonucleotide reductase nrd genes and operons by binding to NrdR-boxes. The sequence is that of Transcriptional repressor NrdR from Stenotrophomonas maltophilia (strain R551-3).